Reading from the N-terminus, the 103-residue chain is uncharacterized protein (103 aa).

Its subcellular location is the mitochondrion. This is an uncharacterized protein from Claviceps purpurea (Ergot fungus).